Consider the following 202-residue polypeptide: Phospholipase A2 inhibitor gamma subunit A (202 aa).

The first 19 residues, 1–19 (MKSLQIICLLFIFVARGSC), serve as a signal peptide directing secretion. 8 disulfide bridges follow: C22–C47, C25–C32, C40–C68, C74–C95, C96–C101, C119–C144, C137–C166, and C170–C192.

Belongs to the CNF-like-inhibitor family. As to quaternary structure, heteromer composed of subunit A and subunit B. Expressed by the liver.

Its subcellular location is the secreted. Its function is as follows. Inhibits the enzymatic activity of the phospholipase A2 (PLA2). This Elaphe climacophora (Japanese rat snake) protein is Phospholipase A2 inhibitor gamma subunit A.